Here is a 238-residue protein sequence, read N- to C-terminus: Uridylate kinase (238 aa).

12 to 15 (KLSG) contributes to the ATP binding site. Gly54 lines the UMP pocket. The ATP site is built by Gly55 and Arg59. UMP-binding positions include Asp74 and 135-142 (TGNPYFTT). Residues Thr162, Asn163, Tyr168, and Asp171 each contribute to the ATP site.

This sequence belongs to the UMP kinase family. As to quaternary structure, homohexamer.

It is found in the cytoplasm. The catalysed reaction is UMP + ATP = UDP + ADP. It functions in the pathway pyrimidine metabolism; CTP biosynthesis via de novo pathway; UDP from UMP (UMPK route): step 1/1. Inhibited by UTP. In terms of biological role, catalyzes the reversible phosphorylation of UMP to UDP. This Nitrobacter winogradskyi (strain ATCC 25391 / DSM 10237 / CIP 104748 / NCIMB 11846 / Nb-255) protein is Uridylate kinase.